The chain runs to 369 residues: MMKTVRIALDAMGGDFGPEVMLPGAALALERGLNIAFLLFGDEKLIKPYLAAHPALAAVATLHHTNVAVRMDDKPSQALRSGRRNSSMWLSIDAVKKNAADIAVSAGNTGALMAMAKTCLHTMPGVDRPAIAAIWPTIRGRTIVLDVGASIGADARHLVNLAIMGAAMARAVLDVERPTVGLLNIGSEEMKGVDDVKAASKLLREMALPQLDYVGFVEGGDIGRGTVDVVVTEGFSGNIALKTAEGTASQMGQYLREALSRDLMSKIGYFFARKGLATLKAKMDPRNVNGGTFLGLDGVVIKSHGHSDVFGTSVAIEIAYRIARHELLGQIRGALAHSHELASRAPNSQTAGGERAAAVPQSAQLRMDS.

The tract at residues 342-369 is disordered; it reads ASRAPNSQTAGGERAAAVPQSAQLRMDS.

This sequence belongs to the PlsX family. As to quaternary structure, homodimer. Probably interacts with PlsY.

It localises to the cytoplasm. It carries out the reaction a fatty acyl-[ACP] + phosphate = an acyl phosphate + holo-[ACP]. Its pathway is lipid metabolism; phospholipid metabolism. Its function is as follows. Catalyzes the reversible formation of acyl-phosphate (acyl-PO(4)) from acyl-[acyl-carrier-protein] (acyl-ACP). This enzyme utilizes acyl-ACP as fatty acyl donor, but not acyl-CoA. The chain is Phosphate acyltransferase from Methylocella silvestris (strain DSM 15510 / CIP 108128 / LMG 27833 / NCIMB 13906 / BL2).